Here is a 461-residue protein sequence, read N- to C-terminus: Bifunctional protein GlmU (461 aa).

The segment at 1-230 (MECLMAVILA…SSEILGINDR (230 aa)) is pyrophosphorylase. Residues 9 to 12 (LAAG), K23, Q73, 78 to 79 (GT), 101 to 103 (YGD), G140, E155, N170, and N228 each bind UDP-N-acetyl-alpha-D-glucosamine. Residue D103 coordinates Mg(2+). Mg(2+) is bound at residue N228. The tract at residues 231 to 251 (VQLAEAGRIIRSRILKRHMKN) is linker. The N-acetyltransferase stretch occupies residues 252-461 (GVTIIDPDST…KKGMLRQEKE (210 aa)). R333 and K351 together coordinate UDP-N-acetyl-alpha-D-glucosamine. Catalysis depends on H363, which acts as the Proton acceptor. Y366 and N377 together coordinate UDP-N-acetyl-alpha-D-glucosamine. Acetyl-CoA-binding positions include 386-387 (NY), A423, and R440.

In the N-terminal section; belongs to the N-acetylglucosamine-1-phosphate uridyltransferase family. The protein in the C-terminal section; belongs to the transferase hexapeptide repeat family. In terms of assembly, homotrimer. It depends on Mg(2+) as a cofactor.

It is found in the cytoplasm. It catalyses the reaction alpha-D-glucosamine 1-phosphate + acetyl-CoA = N-acetyl-alpha-D-glucosamine 1-phosphate + CoA + H(+). The enzyme catalyses N-acetyl-alpha-D-glucosamine 1-phosphate + UTP + H(+) = UDP-N-acetyl-alpha-D-glucosamine + diphosphate. It functions in the pathway nucleotide-sugar biosynthesis; UDP-N-acetyl-alpha-D-glucosamine biosynthesis; N-acetyl-alpha-D-glucosamine 1-phosphate from alpha-D-glucosamine 6-phosphate (route II): step 2/2. Its pathway is nucleotide-sugar biosynthesis; UDP-N-acetyl-alpha-D-glucosamine biosynthesis; UDP-N-acetyl-alpha-D-glucosamine from N-acetyl-alpha-D-glucosamine 1-phosphate: step 1/1. The protein operates within bacterial outer membrane biogenesis; LPS lipid A biosynthesis. Catalyzes the last two sequential reactions in the de novo biosynthetic pathway for UDP-N-acetylglucosamine (UDP-GlcNAc). The C-terminal domain catalyzes the transfer of acetyl group from acetyl coenzyme A to glucosamine-1-phosphate (GlcN-1-P) to produce N-acetylglucosamine-1-phosphate (GlcNAc-1-P), which is converted into UDP-GlcNAc by the transfer of uridine 5-monophosphate (from uridine 5-triphosphate), a reaction catalyzed by the N-terminal domain. The polypeptide is Bifunctional protein GlmU (Acetivibrio thermocellus (strain ATCC 27405 / DSM 1237 / JCM 9322 / NBRC 103400 / NCIMB 10682 / NRRL B-4536 / VPI 7372) (Clostridium thermocellum)).